The sequence spans 402 residues: GTPase HflX (402 aa).

Residues 181 to 350 (DTVGLIGYTN…MIIEHLNLSI (170 aa)) form the Hflx-type G domain. GTP-binding positions include 187 to 194 (GYTNAGKT), 212 to 216 (FTTLT), 233 to 236 (DTVG), 300 to 303 (NKVD), and 328 to 330 (SAK). Thr-194 and Thr-214 together coordinate Mg(2+).

The protein belongs to the TRAFAC class OBG-HflX-like GTPase superfamily. HflX GTPase family. As to quaternary structure, monomer. Associates with the 50S ribosomal subunit. Mg(2+) is required as a cofactor.

Its subcellular location is the cytoplasm. Its function is as follows. GTPase that associates with the 50S ribosomal subunit and may have a role during protein synthesis or ribosome biogenesis. The polypeptide is GTPase HflX (Methanocaldococcus jannaschii (strain ATCC 43067 / DSM 2661 / JAL-1 / JCM 10045 / NBRC 100440) (Methanococcus jannaschii)).